Consider the following 1818-residue polypeptide: Nestin (1818 aa).

Residues 1-14 (WREKLEAEVQRQNL) are coil 1B. An IF rod domain is found at 1-135 (WREKLEAEVQ…TLLEAENSRL (135 aa)). The interval 15-17 (YQE) is linker 2. Positions 18–135 (RVAHMESSLG…TLLEAENSRL (118 aa)) are coil 2B. S133 bears the Phosphoserine mark. The tract at residues 136–1818 (QTPGRSSQAS…DRDSWSSGED (1683 aa)) is tail. Residues T137 and T160 each carry the phosphothreonine modification. At S180 the chain carries Phosphoserine. T210 is modified (phosphothreonine). Disordered regions lie at residues 266-309 (EEAG…GSSI), 336-355 (AQET…SQGP), 377-451 (HETP…SPEG), and 480-787 (AFKK…EEDQ). S288 carries the post-translational modification Phosphoserine. Positions 292 to 303 (PVLEAKDGDSTE) are enriched in basic and acidic residues. Residues 382-398 (KENCNSLRSVDENQGTL) are compositionally biased toward polar residues. Phosphoserine is present on residues S390 and S400. 2 stretches are compositionally biased toward basic and acidic residues: residues 400–427 (SPEE…EKGV) and 434–443 (LGKEDPRIED). S448 carries the post-translational modification Phosphoserine. The segment covering 495 to 508 (EIQRVERLIEKEGQ) has biased composition (basic and acidic residues). A Phosphoserine modification is found at S513. Basic and acidic residues-rich tracts occupy residues 521 to 536 (TDRP…LKPV) and 565 to 586 (TDRP…KEGQ). Residue S591 is modified to Phosphoserine. Composition is skewed to basic and acidic residues over residues 599–614 (TDRP…LKPV), 643–664 (TDRP…KEGQ), and 711–732 (TDRP…KEGQ). S737 is subject to Phosphoserine. Positions 744–773 (ETYRLLEKENGEPLKPVEEEDQRVERLIEK) are enriched in basic and acidic residues. 2 positions are modified to phosphoserine: S803 and S824. A disordered region spans residues 866–900 (ESLLKKGTQESLESHEDRNQETQDPQRFLEEEGQG). The segment covering 868–886 (LLKKGTQESLESHEDRNQE) has biased composition (basic and acidic residues). A phosphoserine mark is found at S915 and S957. Positions 945 to 998 (SLLERESQDSGKSLEGQEAFRCLGKEDPESLQFPEVQDQEIQRSLQQETQQTLG) are disordered. Over residues 986–997 (QRSLQQETQQTL) the composition is skewed to polar residues. K1043 is covalently cross-linked (Glycyl lysine isopeptide (Lys-Gly) (interchain with G-Cter in SUMO1); alternate). Residue K1043 forms a Glycyl lysine isopeptide (Lys-Gly) (interchain with G-Cter in SUMO2); alternate linkage. Phosphoserine occurs at positions 1052, 1063, 1073, 1123, 1134, 1162, and 1238. 2 disordered regions span residues 1134–1262 (SPEA…LEGQ) and 1334–1818 (HPSL…SGED). 2 stretches are compositionally biased toward basic and acidic residues: residues 1342-1361 (VEAK…KEAG) and 1401-1416 (ASDH…RPSE). The span at 1490-1505 (QDWEESREESEADELG) shows a compositional bias: acidic residues. Phosphoserine occurs at positions 1495, 1499, and 1523. Positions 1570–1579 (LSSEEFEDLG) are enriched in acidic residues. 2 positions are modified to phosphoserine: S1614 and S1623. Residues 1616-1636 (GFADEEESGEEGEEEEHEDGT) show a composition bias toward acidic residues. Positions 1686–1697 (GLETESQDSAEP) are enriched in polar residues. A phosphoserine mark is found at S1698, S1700, S1791, S1814, and S1815. Low complexity predominate over residues 1698-1708 (SGSEVSESVSS).

Belongs to the intermediate filament family. In terms of assembly, interacts with FHOD3. Forms homodimers and homotetramers in vitro. In mixtures with other intermediate filament proteins such as vimentin and alpha-internexin, preferentially forms heterodimers which can assemble to form intermediate filaments if nestin does not exceed 25%. Constitutively phosphorylated. This increases during mitosis when the cytoplasmic intermediate filament network is reorganized.

Its function is as follows. Required for brain and eye development. Promotes the disassembly of phosphorylated vimentin intermediate filaments (IF) during mitosis and may play a role in the trafficking and distribution of IF proteins and other cellular factors to daughter cells during progenitor cell division. Required for survival, renewal and mitogen-stimulated proliferation of neural progenitor cells. The protein is Nestin of Mesocricetus auratus (Golden hamster).